Reading from the N-terminus, the 562-residue chain is MEDLRRRFPTKKNGEEISNVAVDPPLRKASDALPLPLYLTNTFFLSLFFATVYFLLSRWREKIRNSTPLHVVDLSEICALIGFVASFIYLLGFCGIDLIFRSSSDDDVWVNDGMIPCNQSLDCREVLPIKPNSVDPPRESELDSVEDEEIVKLVIDGTIPSYSLETKLGDCKRAAAIRREAVQRITGKSLTGLPLEGFDYNSILGQCCEMPVGYVQIPVGIAGPLLLDGVEYSVPMATTEGCLVASTNRGFKAIHLSGGAFSVLVKDAMTRAPVVRFPSARRAALVMFYLQDPSNFERLSLIFNKSSRFARLQSITCTIAGRNLYPRFACSTGDAMGMNMVSKGVQNVLDFVKSEFPDMDVIGISGNYCSDKKASAVNWIEGRGKHVVCEAFIKAEIVEKVLKTSVEALVELNTLKNLVGSAMAGSLGGFNAHSSNIVSAVFIATGQDPAQNVESSHCMTMILPDGDDLHISVSMPCIEVGTVGGGTQLASQAACLNLLGVKGSNNEKPGSNAQQLARIVAGSVLAGELSLMSAIAAGQLVKSHMKYNRSSRDIGPSSQVNR.

2 consecutive transmembrane segments (helical) span residues 32–56 and 77–100; these read ALPL…YFLL and ICAL…DLIF. The linker stretch occupies residues 101-146; that stretch reads RSSSDDDVWVNDGMIPCNQSLDCREVLPIKPNSVDPPRESELDSVE. N118 is a glycosylation site (N-linked (GlcNAc...) asparagine). Residues 147 to 562 are catalytic; that stretch reads DEEIVKLVID…DIGPSSQVNR (416 aa). The active-site Charge relay system is E240. N304 carries N-linked (GlcNAc...) asparagine glycosylation. Catalysis depends on charge relay system residues K372 and D448. Residue H544 is the Proton donor of the active site. The N-linked (GlcNAc...) asparagine glycan is linked to N548. At S550 the chain carries Phosphoserine.

This sequence belongs to the HMG-CoA reductase family. Restricted to young seedlings, roots, and inflorescences. Expressed in root tips, shoot apex, secretory zone of the stigma, microspores, mature pollen grains, gynoecium vascular tissue and fertilized ovules.

The protein localises to the endoplasmic reticulum membrane. It carries out the reaction (R)-mevalonate + 2 NADP(+) + CoA = (3S)-3-hydroxy-3-methylglutaryl-CoA + 2 NADPH + 2 H(+). It participates in metabolic intermediate biosynthesis; (R)-mevalonate biosynthesis; (R)-mevalonate from acetyl-CoA: step 3/3. Its activity is regulated as follows. Regulated at the post-translational level in response to alterations of the sphingolipid and the sterol biosynthetic pathways. Catalyzes the synthesis of mevalonate. The specific precursor of all isoprenoid compounds present in plants. This chain is 3-hydroxy-3-methylglutaryl-coenzyme A reductase 2 (HMG2), found in Arabidopsis thaliana (Mouse-ear cress).